Consider the following 118-residue polypeptide: Ribonuclease P protein component (118 aa).

It belongs to the RnpA family. In terms of assembly, consists of a catalytic RNA component (M1 or rnpB) and a protein subunit.

The enzyme catalyses Endonucleolytic cleavage of RNA, removing 5'-extranucleotides from tRNA precursor.. RNaseP catalyzes the removal of the 5'-leader sequence from pre-tRNA to produce the mature 5'-terminus. It can also cleave other RNA substrates such as 4.5S RNA. The protein component plays an auxiliary but essential role in vivo by binding to the 5'-leader sequence and broadening the substrate specificity of the ribozyme. The chain is Ribonuclease P protein component from Photobacterium profundum (strain SS9).